The sequence spans 916 residues: Protein translocase subunit SecA (916 aa).

ATP-binding positions include Gln87, Gly105–Thr109, and Asp512. Residues Gln857–Asp916 form a disordered region. Zn(2+)-binding residues include Cys900, Cys902, Cys911, and His912. The segment covering Lys906 to Asp916 has biased composition (basic residues).

This sequence belongs to the SecA family. As to quaternary structure, monomer and homodimer. Part of the essential Sec protein translocation apparatus which comprises SecA, SecYEG and auxiliary proteins SecDF-YajC and YidC. Requires Zn(2+) as cofactor.

The protein resides in the cell inner membrane. Its subcellular location is the cytoplasm. The catalysed reaction is ATP + H2O + cellular proteinSide 1 = ADP + phosphate + cellular proteinSide 2.. Functionally, part of the Sec protein translocase complex. Interacts with the SecYEG preprotein conducting channel. Has a central role in coupling the hydrolysis of ATP to the transfer of proteins into and across the cell membrane, serving both as a receptor for the preprotein-SecB complex and as an ATP-driven molecular motor driving the stepwise translocation of polypeptide chains across the membrane. The chain is Protein translocase subunit SecA from Pseudomonas paraeruginosa (strain DSM 24068 / PA7) (Pseudomonas aeruginosa (strain PA7)).